A 264-amino-acid chain; its full sequence is S-adenosylmethionine decarboxylase proenzyme (264 aa).

Ser112 acts as the Schiff-base intermediate with substrate; via pyruvic acid in catalysis. Pyruvic acid (Ser); by autocatalysis is present on Ser112. His117 (proton acceptor; for processing activity) is an active-site residue. Residue Cys140 is the Proton donor; for catalytic activity of the active site.

The protein belongs to the prokaryotic AdoMetDC family. Type 2 subfamily. Heterooctamer of four alpha and four beta chains arranged as a tetramer of alpha/beta heterodimers. Requires pyruvate as cofactor. In terms of processing, is synthesized initially as an inactive proenzyme. Formation of the active enzyme involves a self-maturation process in which the active site pyruvoyl group is generated from an internal serine residue via an autocatalytic post-translational modification. Two non-identical subunits are generated from the proenzyme in this reaction, and the pyruvate is formed at the N-terminus of the alpha chain, which is derived from the carboxyl end of the proenzyme. The post-translation cleavage follows an unusual pathway, termed non-hydrolytic serinolysis, in which the side chain hydroxyl group of the serine supplies its oxygen atom to form the C-terminus of the beta chain, while the remainder of the serine residue undergoes an oxidative deamination to produce ammonia and the pyruvoyl group blocking the N-terminus of the alpha chain.

The enzyme catalyses S-adenosyl-L-methionine + H(+) = S-adenosyl 3-(methylsulfanyl)propylamine + CO2. Its pathway is amine and polyamine biosynthesis; S-adenosylmethioninamine biosynthesis; S-adenosylmethioninamine from S-adenosyl-L-methionine: step 1/1. Catalyzes the decarboxylation of S-adenosylmethionine to S-adenosylmethioninamine (dcAdoMet), the propylamine donor required for the synthesis of the polyamines spermine and spermidine from the diamine putrescine. The chain is S-adenosylmethionine decarboxylase proenzyme from Yersinia pseudotuberculosis serotype I (strain IP32953).